Here is a 70-residue protein sequence, read N- to C-terminus: Large ribosomal subunit protein eL38 (70 aa).

Residue Lys4 forms a Glycyl lysine isopeptide (Lys-Gly) (interchain with G-Cter in SUMO2) linkage. An N6-acetyllysine; alternate modification is found at Lys9. A Glycyl lysine isopeptide (Lys-Gly) (interchain with G-Cter in SUMO2); alternate cross-link involves residue Lys9. Lys67 is modified (N6-acetyllysine).

The protein belongs to the eukaryotic ribosomal protein eL38 family. As to quaternary structure, component of the large ribosomal subunit.

Its subcellular location is the cytoplasm. Its function is as follows. Component of the large ribosomal subunit. The ribosome is a large ribonucleoprotein complex responsible for the synthesis of proteins in the cell. The chain is Large ribosomal subunit protein eL38 (RPL38) from Macaca fascicularis (Crab-eating macaque).